The primary structure comprises 162 residues: Caveolin-2 (162 aa).

Over 1–86 the chain is Cytoplasmic; the sequence is MGLETEKADV…FEISKYVMYK (86 aa). A Phosphotyrosine; by SRC modification is found at Y19. 2 positions are modified to phosphoserine: S20 and S23. Y27 is subject to Phosphotyrosine; by SRC. The residue at position 36 (S36) is a Phosphoserine. An intramembrane region (helical) is located at residues 87–107; the sequence is FLTVFLAIPLAFLAGILFATL. The Cytoplasmic portion of the chain corresponds to 108–162; that stretch reads SCLHIWIIMPFVKTCLMVLPSVQTIWKSVTDAIIAPLCTSIGRSFSSVSLQLSQD.

Belongs to the caveolin family. In terms of assembly, monomer or homodimer. Interacts with CAV1; the interaction forms a stable heterooligomeric complex that is required for targeting to lipid rafts and for caveolae formation. Tyrosine phosphorylated forms do not form heterooligomers with the Tyr-19-phosphorylated form existing as a monomer or dimer, and the Tyr-27-form as a monomer only. Interacts (tyrosine phosphorylated form) with the SH2 domain-containing proteins, RASA1, NCK1 and SRC. Interacts (tyrosine phosphorylated form) with INSR, the interaction (Tyr-27-phosphorylated form) is increased on insulin stimulation. Interacts (Tyr-19 phosphorylated form) with MAPK1 (phosphorylated form); the interaction, promoted by insulin, leads to nuclear location and MAPK1 activation. Interacts with STAT3; the interaction is increased on insulin-induced tyrosine phosphorylation leading to STAT activation. In terms of processing, phosphorylated on serine and tyrosine residues. CAV1 promotes phosphorylation on Ser-23 which then targets the complex to the plasma membrane, lipid rafts and caveolae. Phosphorylation on Ser-36 appears to modulate mitosis in endothelial cells. Phosphorylation on both Tyr-19 and Tyr-27 is required for insulin-induced 'Ser-727' phosphorylation of STAT3 and its activation. Phosphorylation on Tyr-19 is required for insulin-induced phosphorylation of MAPK1 and DNA binding of STAT3. Tyrosine phosphorylation is induced by both EGF and insulin (By. similarity).

It localises to the nucleus. Its subcellular location is the cytoplasm. The protein resides in the golgi apparatus membrane. It is found in the cell membrane. The protein localises to the membrane. It localises to the caveola. Its function is as follows. May act as a scaffolding protein within caveolar membranes. Interacts directly with G-protein alpha subunits and can functionally regulate their activity. Acts as an accessory protein in conjunction with CAV1 in targeting to lipid rafts and driving caveolae formation. The Ser-36 phosphorylated form has a role in modulating mitosis in endothelial cells. Positive regulator of cellular mitogenesis of the MAPK signaling pathway. Required for the insulin-stimulated nuclear translocation and activation of MAPK1 and STAT3, and the subsequent regulation of cell cycle progression. The protein is Caveolin-2 (CAV2) of Plecturocebus moloch (Dusky titi monkey).